A 436-amino-acid polypeptide reads, in one-letter code: 3-ketoacyl-CoA thiolase (436 aa).

Residue C99 is the Acyl-thioester intermediate of the active site. Active-site proton acceptor residues include H392 and C422.

The protein belongs to the thiolase-like superfamily. Thiolase family. In terms of assembly, heterotetramer of two alpha chains (FadJ) and two beta chains (FadI).

It localises to the cytoplasm. The enzyme catalyses an acyl-CoA + acetyl-CoA = a 3-oxoacyl-CoA + CoA. The protein operates within lipid metabolism; fatty acid beta-oxidation. Its function is as follows. Catalyzes the final step of fatty acid oxidation in which acetyl-CoA is released and the CoA ester of a fatty acid two carbons shorter is formed. The protein is 3-ketoacyl-CoA thiolase of Shigella flexneri.